Reading from the N-terminus, the 469-residue chain is Transcription factor E2FB (469 aa).

2 disordered regions span residues 1 to 28 (MSEE…PPLV) and 84 to 118 (QTPV…AGSP). Composition is skewed to polar residues over residues 8–22 (QFPS…SLSS) and 100–118 (SAKS…AGSP). Residues 129-194 (RYDSSLGLLT…TLKNRIQWKG (66 aa)) mediate DNA binding. Residues 202-246 (ETIESIANLQDEVQNLAAEEARLDDQIRESQERLTSLSEDENNKR) are a coiled coil. A leucine-zipper region spans residues 210-238 (LQDEVQNLAAEEARLDDQIRESQERLTSL). Positions 319-374 (PQADEPSNVPDEPSNVPDVPSNLPSTSGLPENHDVSMPMKEESTERNMETQEVDDT) are disordered. Positions 349–374 (ENHDVSMPMKEESTERNMETQEVDDT) are enriched in basic and acidic residues. Residues 403–419 (DYWFRSEVGEVSITDMW) are retinoblastoma protein binding. Residues 426-469 (DWNQMITFDQDHAGPSDNKILEQPQTPSSPTPEESTATRSPTGS) are disordered. Residues 447 to 469 (EQPQTPSSPTPEESTATRSPTGS) show a composition bias toward low complexity.

This sequence belongs to the E2F/DP family. As to quaternary structure, heterodimer with DP proteins. Interacts (via dimerization domain) preferentially with DPA, but also with DPB. Interacts with PURA1 and retinoblastoma-related protein RBR1. Component of a DREAM-like complex which modulates a variety of developmentally regulated genes and of the mitotic genes in proliferating and differentiated cells. Interacts with MYB3R4 only at early stages of leaves development. In terms of processing, phosphorylated. In terms of tissue distribution, expressed in proliferating cells and several differentiated tissues. Detected in inflorescence and shoot apical meristems, cotyledonary vascular tissues, leaf primordia, young leaves, base of trichomes, central cylinder and elongation zone of roots, lateral root primordia, flowers, pistils of immature flowers and pollen grains.

Its subcellular location is the cytoplasm. The protein resides in the nucleus. Functionally, transcription activator that binds DNA cooperatively with DP proteins through the E2 recognition site, 5'-TTTC[CG]CGC-3' found in the promoter region of a number of genes whose products are involved in cell cycle regulation or in DNA replication. The binding of retinoblastoma-related proteins represses transactivation. Involved in the control of cell-cycle progression from G1 to S phase and from G2 to M phase. Stimulates cell proliferation and delays differentiation. Represses cell enlargement and endoreduplication in auxin-free conditions. In Arabidopsis thaliana (Mouse-ear cress), this protein is Transcription factor E2FB (E2FB).